We begin with the raw amino-acid sequence, 625 residues long: DNA-directed RNA polymerase subunit gamma (625 aa).

Positions 71, 73, 86, and 89 each coordinate Zn(2+). Mg(2+) is bound by residues Asp-467, Asp-469, and Asp-471.

This sequence belongs to the RNA polymerase beta' chain family. RpoC1 subfamily. In cyanobacteria the RNAP catalytic core is composed of 2 alpha, 1 beta, 1 beta', 1 gamma and 1 omega subunit. When a sigma factor is associated with the core the holoenzyme is formed, which can initiate transcription. The cofactor is Mg(2+). Requires Zn(2+) as cofactor.

The catalysed reaction is RNA(n) + a ribonucleoside 5'-triphosphate = RNA(n+1) + diphosphate. DNA-dependent RNA polymerase catalyzes the transcription of DNA into RNA using the four ribonucleoside triphosphates as substrates. In Nostoc punctiforme (strain ATCC 29133 / PCC 73102), this protein is DNA-directed RNA polymerase subunit gamma.